Here is a 318-residue protein sequence, read N- to C-terminus: uncharacterized protein (318 aa).

Residues 67–157 (LAFDELEKEK…SLKAIQTSQE (91 aa)) adopt a coiled-coil conformation. A disordered region spans residues 172 to 318 (ESTNKVEKNA…KGFFARLFNL (147 aa)). Basic and acidic residues-rich tracts occupy residues 175–193 (NKVE…KDSK) and 219–236 (KVDK…EKAS). The segment covering 237-248 (VEQSKNGNAAET) has biased composition (polar residues). Basic and acidic residues-rich tracts occupy residues 249-274 (SNKE…HAEA) and 300-310 (SEPKPQEEKKG).

This is an uncharacterized protein from Staphylococcus aureus (strain MW2).